The primary structure comprises 481 residues: Aspartyl/glutamyl-tRNA(Asn/Gln) amidotransferase subunit B (481 aa).

This sequence belongs to the GatB/GatE family. GatB subfamily. In terms of assembly, heterotrimer of A, B and C subunits.

The catalysed reaction is L-glutamyl-tRNA(Gln) + L-glutamine + ATP + H2O = L-glutaminyl-tRNA(Gln) + L-glutamate + ADP + phosphate + H(+). The enzyme catalyses L-aspartyl-tRNA(Asn) + L-glutamine + ATP + H2O = L-asparaginyl-tRNA(Asn) + L-glutamate + ADP + phosphate + 2 H(+). Functionally, allows the formation of correctly charged Asn-tRNA(Asn) or Gln-tRNA(Gln) through the transamidation of misacylated Asp-tRNA(Asn) or Glu-tRNA(Gln) in organisms which lack either or both of asparaginyl-tRNA or glutaminyl-tRNA synthetases. The reaction takes place in the presence of glutamine and ATP through an activated phospho-Asp-tRNA(Asn) or phospho-Glu-tRNA(Gln). This Pseudomonas putida (strain ATCC 47054 / DSM 6125 / CFBP 8728 / NCIMB 11950 / KT2440) protein is Aspartyl/glutamyl-tRNA(Asn/Gln) amidotransferase subunit B.